The primary structure comprises 607 residues: Discoidin-inducing complex subunit B (607 aa).

Positions M1 to G19 are cleaved as a signal peptide. At Q20 to S554 the chain is on the extracellular side. Residues N75, N161, N215, N276, N277, N307, N324, N453, N477, and N527 are each glycosylated (N-linked (GlcNAc...) asparagine). Residues L555–W575 traverse the membrane as a helical segment. Residues K576–L607 lie on the Cytoplasmic side of the membrane.

In terms of assembly, forms a complex with psiF/dicA.

The protein localises to the membrane. It is found in the secreted. Its function is as follows. Component of a complex that acts as a quorum sensing protein regulating discoidin gene expression during growth and development. Its function in the complex is unclear as it has no ability to induce discoidin during growth and development by itself. This Dictyostelium discoideum (Social amoeba) protein is Discoidin-inducing complex subunit B (dicB).